Here is a 509-residue protein sequence, read N- to C-terminus: Heat shock 70 kDa protein 14 (509 aa).

This sequence belongs to the heat shock protein 70 family. Component of ribosome-associated complex (RAC), a heterodimer composed of Hsp70/DnaK-type chaperone HSPA14 and Hsp40/DnaJ-type chaperone DNAJC2.

The protein localises to the cytoplasm. It is found in the cytosol. Functionally, component of the ribosome-associated complex (RAC), a complex involved in folding or maintaining nascent polypeptides in a folding-competent state. In the RAC complex, binds to the nascent polypeptide chain, while DNAJC2 stimulates its ATPase activity. The chain is Heat shock 70 kDa protein 14 (HSPA14) from Homo sapiens (Human).